The sequence spans 381 residues: N-acetyl-alpha-D-glucosaminyl L-malate synthase (381 aa).

Residues serine 16, tyrosine 94, and threonine 122 each coordinate (S)-malate. Residues asparagine 206, glutamine 262, and glutamate 290 each coordinate UDP.

The protein belongs to the glycosyltransferase group 1 family. Glycosyltransferase 4 subfamily. As to quaternary structure, dimer of tetramers.

The catalysed reaction is (S)-malate + UDP-N-acetyl-alpha-D-glucosamine = (S)-malyl N-acetyl-alpha-D-glucosaminide + UDP + H(+). Involved in bacillithiol (BSH) biosynthesis. Catalyzes the first step of the pathway, the formation of N-acetylglucosaminylmalate (GlcNAc-Mal) from UDP-N-acetylglucosamine (UDP-GlcNAc) and L-malate. The sequence is that of N-acetyl-alpha-D-glucosaminyl L-malate synthase from Bacillus anthracis.